The following is a 364-amino-acid chain: Aminomethyltransferase (364 aa).

It belongs to the GcvT family. In terms of assembly, the glycine cleavage system is composed of four proteins: P, T, L and H.

It catalyses the reaction N(6)-[(R)-S(8)-aminomethyldihydrolipoyl]-L-lysyl-[protein] + (6S)-5,6,7,8-tetrahydrofolate = N(6)-[(R)-dihydrolipoyl]-L-lysyl-[protein] + (6R)-5,10-methylene-5,6,7,8-tetrahydrofolate + NH4(+). Its function is as follows. The glycine cleavage system catalyzes the degradation of glycine. This Escherichia coli O127:H6 (strain E2348/69 / EPEC) protein is Aminomethyltransferase.